Reading from the N-terminus, the 912-residue chain is Coatomer subunit beta (912 aa).

HEAT repeat units follow at residues 59 to 96 (PIPQ…THLG), 100 to 135 (SEMI…REAE), 136 to 172 (VLEP…HFDY), 244 to 281 (SERS…APTA), 300 to 337 (NVKM…PNID), 339 to 375 (CKKV…KEFD), 397 to 434 (EVLG…TYPS), 441 to 479 (KKLI…AMTS), 550 to 575 (LKAQ…TSKS), and 576 to 612 (AYER…YLKY).

As to quaternary structure, oligomeric complex that consists of at least the alpha, beta, beta', gamma, delta, epsilon and zeta subunits.

It localises to the cytoplasm. Its subcellular location is the golgi apparatus membrane. It is found in the cytoplasmic vesicle. The protein resides in the COPI-coated vesicle membrane. Its function is as follows. The coatomer is a cytosolic protein complex that binds to dilysine motifs and reversibly associates with Golgi non-clathrin-coated vesicles, which further mediate biosynthetic protein transport from the ER, via the Golgi up to the trans Golgi network. Coatomer complex is required for budding from Golgi membranes, and is essential for the retrograde Golgi-to-ER transport of dilysine-tagged proteins. The sequence is that of Coatomer subunit beta (copb) from Dictyostelium discoideum (Social amoeba).